Reading from the N-terminus, the 491-residue chain is UDP-N-acetylmuramate--L-alanine ligase (491 aa).

126–132 (GTHGKTT) lines the ATP pocket.

It belongs to the MurCDEF family.

Its subcellular location is the cytoplasm. It catalyses the reaction UDP-N-acetyl-alpha-D-muramate + L-alanine + ATP = UDP-N-acetyl-alpha-D-muramoyl-L-alanine + ADP + phosphate + H(+). Its pathway is cell wall biogenesis; peptidoglycan biosynthesis. Cell wall formation. In Shigella boydii serotype 18 (strain CDC 3083-94 / BS512), this protein is UDP-N-acetylmuramate--L-alanine ligase.